The following is a 2049-amino-acid chain: Kinetochore-associated protein rod-1 (2049 aa).

In terms of assembly, component of the RZZ complex composed of rod-1, czw-1 and zwl-1. Interacts (via N-terminus) with NDC80 complex component ndc-80.

It localises to the chromosome. The protein localises to the centromere. The protein resides in the kinetochore. Its subcellular location is the cytoplasm. It is found in the cytoskeleton. It localises to the spindle. Its function is as follows. Essential component of the mitotic checkpoint, which prevents cells from prematurely exiting mitosis. Required for chromosome segregation, the assembly of the dynein-dynactin and mdf-1-mdf-2 complexes onto kinetochores and spindle pole separation. Plays a role in nuclear envelope breakdown. Its function related to the spindle assembly machinery and kinetochore-microtubule attachments likely depends on its association in the mitotic RZZ complex. The RZZ complex recruits the spindly-like protein spdl-1 to kinetochores. To prevent irregular chromosome segregation, the complex also inhibits the attachment of the kinetochore-associated NDC80 complex to microtubules. The recruitment of spdl-1 to kinetochores relieves this inhibition. Required for embryonic development. This is Kinetochore-associated protein rod-1 from Caenorhabditis elegans.